The primary structure comprises 471 residues: Dynein regulatory complex subunit 4 (471 aa).

The tract at residues 1 to 24 is disordered; it reads MAPKKKGTKKESKKDAVATGDIEG. Coiled coils occupy residues 23 to 239 and 282 to 425; these read EGAS…YNDI and LSRA…DVAK.

The protein belongs to the DRC4 family. As to quaternary structure, component of the nexin-dynein regulatory complex (N-DRC). Interacts with DRC1, DRC2 and DRC5.

Its subcellular location is the cytoplasm. The protein resides in the cytoskeleton. The protein localises to the flagellum axoneme. It localises to the flagellum basal body. In terms of biological role, component of the nexin-dynein regulatory complex (N-DRC), a key regulator of ciliary/flagellar motility which maintains the alignment and integrity of the distal axoneme and regulates microtubule sliding in motile axonemes. Plays an important role in the assembly of the N-DRC linker. In Chlamydomonas reinhardtii (Chlamydomonas smithii), this protein is Dynein regulatory complex subunit 4.